Consider the following 186-residue polypeptide: PR-toxin biosynthesis cluster protein 7 (186 aa).

Residues 24–43 (LGEVTTGGVTPRGTFIFCPI) form a helical membrane-spanning segment.

Its subcellular location is the membrane. It functions in the pathway sesquiterpene biosynthesis. Part of the gene cluster that mediates the biosynthesis of PR-toxin, a bicyclic sesquiterpene belonging to the eremophilane class and acting as a mycotoxin. The first step of the pathway is catalyzed by the aristolochene synthase which performs the cyclization of trans,trans-farnesyl diphosphate (FPP) to the bicyclic sesquiterpene aristolochene. Following the formation of aristolochene, the non-oxygenated aristolochene is converted to the trioxygenated intermediate eremofortin B, via 7-epi-neopetasone. This conversion appears to involve three enzymes, a hydroxysterol oxidase-like enzyme, the quinone-oxidase prx3 that forms the quinone-type-structure in the bicyclic nucleus of aristolochene with the C8-oxo group and the C-3 hydroxyl group, and the P450 monooxygenase ORF6 that introduces the epoxide at the double bond between carbons 1 and 2. No monoxy or dioxy-intermediates have been reported to be released to the broth, so these three early oxidative reactions may be coupled together. Eremofortin B is further oxidized by another P450 monooxygenase, that introduces a second epoxide between carbons 7 and 11 prior to acetylation to eremofortin A by the acetyltransferase ORF8. The second epoxidation may be performed by a second P450 monooxygenase. After the acetylation step, eremofortin A is converted to eremofortin C and then to PR-toxin. First the conversion of eremofortin A to eremofortin C proceeds by oxidation of the side chain of the molecule at C-12 and is catalyzed by the short-chain oxidoreductase prx1. The cytochrome P450 monooxygenase ORF6 is probably also involved in this step. The primary alcohol formed at C-12 is finally oxidized by the short-chain alcohol dehydrogenase prx4 that forms PR-toxin. This is PR-toxin biosynthesis cluster protein 7 from Penicillium roqueforti (strain FM164).